The chain runs to 357 residues: Dehydrogenase FUB6 (357 aa).

The segment covering 1 to 17 (MGGEVSNKTWVFKQSPS) has biased composition (polar residues). Residues 1-22 (MGGEVSNKTWVFKQSPSGLPEP) are disordered.

This sequence belongs to the zinc-containing alcohol dehydrogenase family. Quinone oxidoreductase subfamily.

It participates in mycotoxin biosynthesis. Its function is as follows. Dehydrogenase; part of the gene cluster that mediates the biosynthesis of fusaric acid, a mycotoxin with low to moderate toxicity to animals and humans, but with high phytotoxic properties. L-aspartate is suggested as fusaric acid amino acid precursor that is activated and further processed to O-acetyl-L-homoserine by cluster enzymes aspartate kinase FUB3 and homoserine O-acetyltransferase FUB5, as well as enzymes of the primary metabolism. The polyketide synthase (PKS) FUB1 generates the triketide trans-2-hexenal which is presumptively released by the hydrolase FUB4 and linked to the NRPS-bound amino acid precursor by NAD(P)-dependent dehydrogenase FUB6. FUB1, FUB4, and the non-canonical NRPS Fub8 may form an enzyme complex. Further processing of the NRPS-bound intermediate might be carried out by FUB6 and the O-acetylhomoserine FUB7, enabling a spontaneous electrocyclization to close the carbon backbone of fusaric acid. Dihydrofusaric acid is likely to be released via reduction by the thioester reductase (TR) domain of FUB8 whereupon the final oxidation to fusaric acid may (also) be performed by the FMN-dependent dehydrogenase FUB9. The chain is Dehydrogenase FUB6 from Fusarium oxysporum f. sp. lycopersici (strain 4287 / CBS 123668 / FGSC 9935 / NRRL 34936) (Fusarium vascular wilt of tomato).